A 340-amino-acid polypeptide reads, in one-letter code: N-acetyl-gamma-glutamyl-phosphate reductase (340 aa).

Cys-146 is a catalytic residue.

It belongs to the NAGSA dehydrogenase family. Type 1 subfamily.

It is found in the cytoplasm. It catalyses the reaction N-acetyl-L-glutamate 5-semialdehyde + phosphate + NADP(+) = N-acetyl-L-glutamyl 5-phosphate + NADPH + H(+). The protein operates within amino-acid biosynthesis; L-arginine biosynthesis; N(2)-acetyl-L-ornithine from L-glutamate: step 3/4. In terms of biological role, catalyzes the NADPH-dependent reduction of N-acetyl-5-glutamyl phosphate to yield N-acetyl-L-glutamate 5-semialdehyde. The protein is N-acetyl-gamma-glutamyl-phosphate reductase of Streptococcus thermophilus (strain ATCC BAA-491 / LMD-9).